The primary structure comprises 525 residues: MSQDIHAHKILILDFGSQYTQLIARRVREIGVYCEVRAFDMEDQDVIDFDPKGIILAGGPESVPEPGSPRAPEAVFTLGVPVFGICYGMQTMAEQLGGKVQGSEIREFGYAQIRKHEGPALFDDIQDHIANNGVALLDVWMSHGDKVITMPEDFTLMASTDSCPIAAMANEAKKFYGVQFHPEVTHTLQGGRILSRFIVDICGCDTLWTPANIAQDAIERMQEQVGDKKVLLALSGGVDSSVVAALLHKAIGDQLTCVFVDNGLLRLHEGDQVMKMFADNMGVKVIRVDAEDLFLGKLANEADPEKKRKIIGNTFIDVFDTEATKLTDVEFLAQGTIYPDVIESAASKTGKAHVIKSHHNVGGLPEDMQFKLVEPLRELFKDEVRKLGLELGLPYDMVYRHPFPGPGLGVRILGEVKKEYADILRRADAIFIEELRNAGWYEKTSQAFAVFLPVKSVGVVGDGRRYEYVVALRAVETIDFMTARWAHLPYELLEKVSGRIINEIEHISRVTYDVSSKPPATIEWE.

A Glutamine amidotransferase type-1 domain is found at 9–207 (KILILDFGSQ…IVDICGCDTL (199 aa)). The Nucleophile role is filled by cysteine 86. Catalysis depends on residues histidine 181 and glutamate 183. The GMPS ATP-PPase domain maps to 208 to 400 (WTPANIAQDA…LGLPYDMVYR (193 aa)). An ATP-binding site is contributed by 235-241 (SGGVDSS).

Homodimer.

It catalyses the reaction XMP + L-glutamine + ATP + H2O = GMP + L-glutamate + AMP + diphosphate + 2 H(+). It participates in purine metabolism; GMP biosynthesis; GMP from XMP (L-Gln route): step 1/1. In terms of biological role, catalyzes the synthesis of GMP from XMP. This chain is GMP synthase [glutamine-hydrolyzing], found in Marinomonas sp. (strain MWYL1).